A 392-amino-acid polypeptide reads, in one-letter code: O-phospho-L-seryl-tRNA:Cys-tRNA synthase 1 (392 aa).

Residues 85–86 (AR), asparagine 190, and 213–215 (SGH) contribute to the pyridoxal 5'-phosphate site. Lysine 216 is subject to N6-(pyridoxal phosphate)lysine.

It belongs to the SepCysS family. As to quaternary structure, homodimer. Interacts with SepRS. Pyridoxal 5'-phosphate serves as cofactor.

It carries out the reaction O-phospho-L-seryl-tRNA(Cys) + hydrogen sulfide + H(+) = L-cysteinyl-tRNA(Cys) + phosphate. Functionally, converts O-phospho-L-seryl-tRNA(Cys) (Sep-tRNA(Cys)) to L-cysteinyl-tRNA(Cys) (Cys-tRNA(Cys)). In Methanocorpusculum labreanum (strain ATCC 43576 / DSM 4855 / Z), this protein is O-phospho-L-seryl-tRNA:Cys-tRNA synthase 1.